The sequence spans 446 residues: Scytalone dehydratase-like protein Arp1 (446 aa).

Y323 is a binding site for substrate. Catalysis depends on residues H358 and H383. N404 provides a ligand contact to substrate.

Belongs to the scytalone dehydratase family. In terms of assembly, homotrimer. Each subunit contains an active site, located in the central part of the hydrophobic core of the monomer, which functions independently.

Functionally, scytalone dehydratase-like protein; part of the Pks2 gene cluster that mediates the formation of infectious structures (appressoria), enabling these fungi to kill insects faster. The product of the Pks2 gene cluster is different from the one of Pks1 and has still not been identified. The chain is Scytalone dehydratase-like protein Arp1 from Metarhizium acridum (strain CQMa 102).